We begin with the raw amino-acid sequence, 989 residues long: Vacuolar membrane protease (989 aa).

The interval 1 to 25 (MDRQSLRTTLRAMDASNENGSAKGA) is disordered. Topologically, residues 1 to 41 (MDRQSLRTTLRAMDASNENGSAKGAKKTTIGSFVRWTFGFN) are cytoplasmic. A helical transmembrane segment spans residues 42 to 62 (SVPLTTLVTITTVLLGLLVYV). Topologically, residues 63 to 383 (STSVNPPDVT…YLFIILPLQY (321 aa)) are vacuolar. Residues His-181 and Asp-193 each coordinate Zn(2+). The active-site Proton acceptor is Glu-227. Glu-228 serves as a coordination point for Zn(2+). N-linked (GlcNAc...) asparagine glycosylation occurs at Asn-245. Zn(2+) contacts are provided by Glu-253 and His-325. Residues 384-404 (IFVISCLTLAVGPIFVGFLFL) form a helical membrane-spanning segment. Residues 405 to 426 (LVLRKQINAGTSETILGGWLRS) are Cytoplasmic-facing. The chain crosses the membrane as a helical span at residues 427–447 (IVSVLVSVVATYFVVETLHLG). Residues 448 to 460 (NELYVVRSFYTPL) are Vacuolar-facing. Residues 461-481 (FAGLGTFIFVNYVLLGFFHFV) form a helical membrane-spanning segment. The Cytoplasmic segment spans residues 482-488 (RPVCDQK). Residues 489–509 (LIILLELSVVLWVLLLLSVIH) traverse the membrane as a helical segment. Over 510-520 (EATHKATGEYH) the chain is Vacuolar. The helical transmembrane segment at 521-541 (FLILYIVVATASILGLFGHLV) threads the bilayer. Residues 542–611 (TSTETSTFVE…IAVSMGYDWS (70 aa)) are Cytoplasmic-facing. The interval 548–576 (TFVEGPEDEEDTVDASEATETSPLLPEAS) is disordered. Residues 552–561 (GPEDEEDTVD) are compositionally biased toward acidic residues. The chain crosses the membrane as a helical span at residues 612–632 (IQFLLVVPITFFVTFGLAASL). The Vacuolar segment spans residues 633-648 (LDGLHQTPLESEKSAD). A helical membrane pass occupies residues 649–669 (FVYTTITAMSVLVGITFLPFV). Over 670–673 (HKLQ) the chain is Cytoplasmic. A helical transmembrane segment spans residues 674–694 (VFVPIVVVGVAVTASFVHILS). Residues 695–989 (PPFSSNAPAK…LVEVSKYVEL (295 aa)) are Vacuolar-facing. N-linked (GlcNAc...) asparagine glycosylation is found at Asn-745, Asn-793, and Asn-822.

Belongs to the peptidase M28 family. The cofactor is Zn(2+).

The protein resides in the vacuole membrane. May be involved in vacuolar sorting and osmoregulation. This Yarrowia lipolytica (strain CLIB 122 / E 150) (Yeast) protein is Vacuolar membrane protease.